A 399-amino-acid polypeptide reads, in one-letter code: Dof zinc finger protein DOF5.1 (399 aa).

The Dof-type zinc finger occupies 95-149 (LKCPRCDSTNTKFCYFNNYSLTQPRHFCKACRRYWTRGGALRSVPVGGGCRRNKR). Cys97, Cys100, Cys122, and Cys125 together coordinate Zn(2+). Residues 139–176 (PVGGGCRRNKRTKNSSGGGGGSTSSGNSKSQDSATSND) form a disordered region.

In terms of tissue distribution, expressed ubiquitously, especially in the vascular tissues, except in seeds, petals and anthers. Specific to the vascular tissues in young leaves, cotyledons and flower buds. The PEAR proteins (e.g. DOF2.4, DOF5.1, DOF3.2, DOF1.1, DOF5.6 and DOF5.3) form a short-range concentration gradient that peaks at protophloem sieve elements (PSE).

Its subcellular location is the nucleus. Transcription factor that binds specifically to a 5'-AA[AG]G-3' consensus core sequence. Binds to 5'-TAAAGT-3' motif in REV promoter to triggers its transcription, thus regulating adaxial-abaxial polarity and influencing leaf axial patterning in an auxin transport- and response-dependent manner (e.g. IAA6 and IAA19 genes expression). Probably involved in early processes for vascular development. The PEAR proteins (e.g. DOF2.4, DOF5.1, DOF3.2, DOF1.1, DOF5.6 and DOF5.3) activate gene expression that promotes radial growth of protophloem sieve elements. In Arabidopsis thaliana (Mouse-ear cress), this protein is Dof zinc finger protein DOF5.1.